Reading from the N-terminus, the 363-residue chain is Ribosomal RNA large subunit methyltransferase M (363 aa).

Residues Ser194, Cys227–Gly230, Asp246, Asp266, and Asp284 contribute to the S-adenosyl-L-methionine site. The Proton acceptor role is filled by Lys313.

Belongs to the class I-like SAM-binding methyltransferase superfamily. RNA methyltransferase RlmE family. RlmM subfamily. In terms of assembly, monomer.

The protein localises to the cytoplasm. It carries out the reaction cytidine(2498) in 23S rRNA + S-adenosyl-L-methionine = 2'-O-methylcytidine(2498) in 23S rRNA + S-adenosyl-L-homocysteine + H(+). Its function is as follows. Catalyzes the 2'-O-methylation at nucleotide C2498 in 23S rRNA. The sequence is that of Ribosomal RNA large subunit methyltransferase M from Haemophilus influenzae (strain PittGG).